A 306-amino-acid chain; its full sequence is N(1)-aminopropylagmatine ureohydrolase (306 aa).

H121, D145, H147, D149, D228, and D230 together coordinate Mn(2+).

It belongs to the arginase family. The cofactor is Mn(2+).

It carries out the reaction N(1)-(3-aminopropyl)agmatine + H2O = urea + spermidine. Its pathway is amine and polyamine biosynthesis; spermidine biosynthesis. Its function is as follows. Ureohydrolase involved in the biosynthesis of spermidine via the carboxyaminopropylagmatine (CAPA) pathway. Catalyzes the conversion of aminopropylagmatine (APA) to spermidine and urea. Is highly specific to APA and incapable of releasing measurable urea from CAPA, agmatine, arginine, guanidine, guanidinobutyrate and guanidinopropionate. In Synechocystis sp. (strain ATCC 27184 / PCC 6803 / Kazusa), this protein is N(1)-aminopropylagmatine ureohydrolase.